The sequence spans 202 residues: Small ribosomal subunit protein uS4c (202 aa).

Positions 90 to 153 (MRLDNIIFRL…KSEAIISKNI (64 aa)) constitute an S4 RNA-binding domain.

This sequence belongs to the universal ribosomal protein uS4 family. In terms of assembly, part of the 30S ribosomal subunit. Contacts protein S5. The interaction surface between S4 and S5 is involved in control of translational fidelity.

Its subcellular location is the plastid. It localises to the chloroplast. In terms of biological role, one of the primary rRNA binding proteins, it binds directly to 16S rRNA where it nucleates assembly of the body of the 30S subunit. Its function is as follows. With S5 and S12 plays an important role in translational accuracy. The sequence is that of Small ribosomal subunit protein uS4c (rps4) from Hookeria lucens (Moss).